We begin with the raw amino-acid sequence, 243 residues long: Aquaporin SIP1-2 (243 aa).

The next 2 membrane-spanning stretches (helical) occupy residues Ala-9–Ala-29 and Phe-45–Cys-65. Positions Asn-74–Thr-76 match the NPA 1 motif. A run of 3 helical transmembrane segments spans residues Leu-98 to Ala-118, Gly-136 to Val-156, and Ile-163 to Tyr-183. An NPA 2 motif is present at residues Asn-189 to Ala-191. The chain crosses the membrane as a helical span at residues Val-211–Phe-231.

This sequence belongs to the MIP/aquaporin (TC 1.A.8) family. SIP (TC 1.A.8.10) subfamily.

It localises to the membrane. Aquaporins facilitate the transport of water and small neutral solutes across cell membranes. The sequence is that of Aquaporin SIP1-2 (SIP1-2) from Zea mays (Maize).